Consider the following 461-residue polypeptide: Porin AaxA (461 aa).

The signal sequence occupies residues 1–22 (MSFRSVLLTALLSLSFTTTMQA).

The protein belongs to the OprB family.

Its subcellular location is the cell outer membrane. Facilitates L-arginine uptake, as part of the AaxABC system. The arginine uptake by the bacterium in the macrophage may be a virulence factor against the host innate immune response. This is Porin AaxA (aaxA) from Chlamydia trachomatis serovar L2 (strain ATCC VR-902B / DSM 19102 / 434/Bu).